A 101-amino-acid chain; its full sequence is Putative defensin-like protein 253 (101 aa).

The signal sequence occupies residues 1 to 23 (MRFASLFVVYCTFMFLDISHVKC). Intrachain disulfides connect Cys31-Cys84, Cys41-Cys66, Cys49-Cys76, and Cys64-Cys78.

The protein belongs to the DEFL family.

The protein localises to the secreted. In Arabidopsis thaliana (Mouse-ear cress), this protein is Putative defensin-like protein 253 (SCRL15).